Reading from the N-terminus, the 119-residue chain is Anamorsin homolog (119 aa).

Polar residues predominate over residues 1–15 (MSSSATSTQAFSLKT). Disordered regions lie at residues 1-21 (MSSS…PIPD) and 33-119 (LKQA…TDDV). Positions 42, 49, 52, and 54 each coordinate [2Fe-2S] cluster. Residues 42-54 (CTTRRRACKNCVC) are fe-S binding site A. Cys81, Cys84, Cys92, and Cys95 together coordinate [4Fe-4S] cluster. Short sequence motifs (cx2C motif) lie at residues 81–84 (CGNC) and 92–95 (CANC). Positions 81–95 (CGNCSKGDAFRCANC) are fe-S binding site B.

The protein belongs to the anamorsin family. In terms of assembly, monomer. [2Fe-2S] cluster is required as a cofactor. [4Fe-4S] cluster serves as cofactor.

The protein localises to the cytoplasm. The protein resides in the mitochondrion intermembrane space. Its function is as follows. Component of the cytosolic iron-sulfur (Fe-S) protein assembly (CIA) machinery. Required for the maturation of extramitochondrial Fe-S proteins. Part of an electron transfer chain functioning in an early step of cytosolic Fe-S biogenesis, facilitating the de novo assembly of a [4Fe-4S] cluster on the cytosolic Fe-S scaffold complex. Electrons are transferred from NADPH via a FAD- and FMN-containing diflavin oxidoreductase. Together with the diflavin oxidoreductase, also required for the assembly of the diferric tyrosyl radical cofactor of ribonucleotide reductase (RNR), probably by providing electrons for reduction during radical cofactor maturation in the catalytic small subunit. The protein is Anamorsin homolog of Leishmania infantum.